An 87-amino-acid polypeptide reads, in one-letter code: Potassium channel toxin TsTXK-beta/Cryptide TyPep-16 (87 aa).

The N-terminal stretch at 1–19 is a signal peptide; it reads MERKLALLLILGMVTLASC. The BetaSPN-type CS-alpha/beta domain occupies 53-87; that stretch reads QFGCPAYEGYCNDHCNDIERKDGECHGFKCKCAKD. 3 disulfides stabilise this stretch: C56-C77, C63-C82, and C67-C84.

Belongs to the long chain scorpion toxin family. Class 1 subfamily. In terms of tissue distribution, expressed by the venom gland.

The protein localises to the secreted. In terms of biological role, specifically blocks voltage-gated potassium channels Kv4.2/KCND2. When measured at the peak current, the blocking effect of this toxin is about 65% and shows an IC(50)=652 nM. However, when measured at a later moment of the depolarising test pulse (500 ms), a 100% block of the current is observed with an IC(50)=313 nM. This may indicate a preference of the toxin for binding the inactivated state of the channel. The inhibition is completely reversible. In vivo, intraplantar injection into rat paw induces overt nociception (licking and lifting behaviors) and decreases the mechanical nociceptive threshold (hyperalgesia). Furthermore, the hyperalgesia is prolonged when intrathecal injections are performed. Functionally, induces discomfort and anxiety in mice, as it moderately diminishes locomotion (but has no effect on rearing behavior). Does not cause hemolysis, mast cell degranulation, LDH release, and does not have antimicrobial activity. Does not cause edema and pain. Its function is as follows. Does not induce hemolytic activity, lactate dehydrogenase (LDH) release from mast cells, mast cell degranulation, and antimicrobial effects. In vivo, injection into mice causes moderate edema formation, but induces very weak or no change in nociceptive sensibility. It also reduces mice locomotion, suggesting an increase in anxiety, but causes no alteration in rearing (standing on hind limbs). This chain is Potassium channel toxin TsTXK-beta/Cryptide TyPep-16, found in Tityus serrulatus (Brazilian scorpion).